The primary structure comprises 618 residues: Probable protein disulfide-isomerase A4 (618 aa).

The signal sequence occupies residues 1–21; it reads MMFDRRFFALVVLLCVSAVRS. 3 Thioredoxin domains span residues 22–139, 138–254, and 480–609; these read TEDA…SRVD, VDPN…DQSK, and SSGK…KHGV. Disulfide bonds link C65–C68, C176–C179, and C529–C532. A Prevents secretion from ER motif is present at residues 615–618; the sequence is KDEL.

The protein belongs to the protein disulfide isomerase family.

Its subcellular location is the endoplasmic reticulum lumen. It carries out the reaction Catalyzes the rearrangement of -S-S- bonds in proteins.. The polypeptide is Probable protein disulfide-isomerase A4 (Caenorhabditis elegans).